A 117-amino-acid chain; its full sequence is Acylphosphatase (117 aa).

The Acylphosphatase-like domain maps to 31–117 (RWRWIIQGQV…RGDDWFEVRY (87 aa)). Residues Arg46 and Asn64 contribute to the active site.

This sequence belongs to the acylphosphatase family.

The enzyme catalyses an acyl phosphate + H2O = a carboxylate + phosphate + H(+). The polypeptide is Acylphosphatase (acyP) (Synechococcus sp. (strain CC9902)).